Consider the following 104-residue polypeptide: Large ribosomal subunit protein uL24 (104 aa).

The protein belongs to the universal ribosomal protein uL24 family. As to quaternary structure, part of the 50S ribosomal subunit.

In terms of biological role, one of two assembly initiator proteins, it binds directly to the 5'-end of the 23S rRNA, where it nucleates assembly of the 50S subunit. One of the proteins that surrounds the polypeptide exit tunnel on the outside of the subunit. The polypeptide is Large ribosomal subunit protein uL24 (Rhodopseudomonas palustris (strain BisB18)).